A 673-amino-acid polypeptide reads, in one-letter code: UvrABC system protein B (673 aa).

One can recognise a Helicase ATP-binding domain in the interval 25–413 (EGIESGLAHQ…GSDIAEQVVR (389 aa)). 38-45 (GVTGSGKT) lines the ATP pocket. Positions 91-114 (YYDYYQPEAYVPTTDTFIEKDASV) match the Beta-hairpin motif. Residues 430-583 (QVDDLLSEIN…QHQYNLDNNI (154 aa)) form the Helicase C-terminal domain. The region spanning 634–669 (DTKIVELEKLMQGHAQNLEFEQAAAMRDKIAKLRIQ) is the UVR domain.

This sequence belongs to the UvrB family. In terms of assembly, forms a heterotetramer with UvrA during the search for lesions. Interacts with UvrC in an incision complex.

It is found in the cytoplasm. In terms of biological role, the UvrABC repair system catalyzes the recognition and processing of DNA lesions. A damage recognition complex composed of 2 UvrA and 2 UvrB subunits scans DNA for abnormalities. Upon binding of the UvrA(2)B(2) complex to a putative damaged site, the DNA wraps around one UvrB monomer. DNA wrap is dependent on ATP binding by UvrB and probably causes local melting of the DNA helix, facilitating insertion of UvrB beta-hairpin between the DNA strands. Then UvrB probes one DNA strand for the presence of a lesion. If a lesion is found the UvrA subunits dissociate and the UvrB-DNA preincision complex is formed. This complex is subsequently bound by UvrC and the second UvrB is released. If no lesion is found, the DNA wraps around the other UvrB subunit that will check the other stand for damage. This Colwellia psychrerythraea (strain 34H / ATCC BAA-681) (Vibrio psychroerythus) protein is UvrABC system protein B.